The following is a 715-amino-acid chain: MFSLSSTVQPQVTIPLSHLINAFHSPKNISVSVNTPVSQKQHRDTVPEHEAPSSEPVLNLRDLGLSELKIGQIDKMVENLLPGFYKDKRVSSCWHTSHISAQSFFENKYGHLDMFSTLRSSSLYRQHPKTLRSICSDLQYFPVFIQSRGFKTLKSRTRRLQSTSERLVEAQNIAPSFVKGFLLRDRGTDLESLDKLMKTKNIPEAHQDAFKTGFAEGFLKAQALTQKTNDSLRRTRLILFVLLLFGIYGLLKNPFLSVRFRTTTGLDSAVDPVQMKNVTFEHVKGVEEAKQELQEVVEFLKNPQKFTVLGGKLPKGILLVGPPGTGKTLLARAVAGEADVPFYYASGSEFDEMFVGVGASRIRNLFREAKANAPCVIFIDELDSVGGKRIESPMHPYSRQTINQLLAEMDGFKPNEGVIIIGATNFPEALDNALIRPGRFDMQVTVPRPDVKGRTEILKWYLNKIKFDKSVDPEIIARGTVGFSGAELENLVNQAALKAAVDGKEMVTMKELEFSKDKILMGPERRSVEIDNKNKTITAYHESGHAIIAYYTKDAMPINKATIMPRGPTLGHVSLLPENDRWNETRAQLLAQMDVSMGGRVAEELIFGTDHITTGASSDFDNATKIAKRMVTKFGMSEKLGVMTYSDTGKLSPETQSAIEQEIRILLRESYERAKHILKTHAKEHKNLAEALLTYETLDAKEIQIVLEGKKLEVR.

At 1 to 237 (MFSLSSTVQP…TNDSLRRTRL (237 aa)) the chain is on the mitochondrial matrix side. The tract at residues 34 to 54 (NTPVSQKQHRDTVPEHEAPSS) is disordered. Positions 41–52 (QHRDTVPEHEAP) are enriched in basic and acidic residues. A helical membrane pass occupies residues 238-258 (ILFVLLLFGIYGLLKNPFLSV). Residues 259 to 715 (RFRTTTGLDS…VLEGKKLEVR (457 aa)) lie on the Mitochondrial intermembrane side of the membrane. Positions 283, 325, 326, 327, 328, and 329 each coordinate ATP. H541 is a binding site for Zn(2+). E542 is an active-site residue. 2 residues coordinate Zn(2+): H545 and D619.

In the N-terminal section; belongs to the AAA ATPase family. This sequence in the C-terminal section; belongs to the peptidase M41 family. In terms of assembly, homohexamer; may also form heterohexamers. Exists in several complexes of 600-1100 kDa. Interacts with AFG1L. The cofactor is Zn(2+). In terms of processing, proteolytically processed by mitochondrial processing peptidase (MPP) to generate the mature form. Degraded in an OMA1-dependent manner in response to oxidative stress. As to expression, detected in heart and skeletal muscle (at protein level).

The protein localises to the mitochondrion inner membrane. It localises to the mitochondrion. The enzyme catalyses ATP + H2O = ADP + phosphate + H(+). In terms of biological role, ATP-dependent metalloprotease that catalyzes the degradation of folded and unfolded proteins with a suitable degron sequence in the mitochondrial intermembrane region. Plays an important role in regulating mitochondrial morphology and function by cleaving OPA1 at position S2, giving rise to a form of OPA1 that promotes maintenance of normal mitochondrial structure and mitochondrial protein metabolism. Ensures cell proliferation, maintains normal cristae morphology and complex I respiration activity, promotes antiapoptotic activity and protects mitochondria from the accumulation of oxidatively damaged membrane proteins. Required to control the accumulation of nonassembled respiratory chain subunits (NDUFB6, OX4 and ND1). Involved in the mitochondrial adaptation in response to various signals, such as stress or developmental cues, by mediating degradation of mitochondrial proteins to rewire the mitochondrial proteome. Catalyzes degradation of mitochondrial proteins, such as translocases, lipid transfer proteins and metabolic enzymes in response to nutrient starvation in order to limit mitochondrial biogenesis: mechanistically, YME1L is activated by decreased phosphatidylethanolamine levels caused by LPIN1 activity in response to mTORC1 inhibition. Acts as a regulator of adult neural stem cell self-renewal by promoting mitochondrial proteome rewiring, preserving neural stem and progenitor cells self-renewal. Required for normal, constitutive degradation of PRELID1. Catalyzes the degradation of OMA1 in response to membrane depolarization. Mediates degradation of TIMM17A downstream of the integrated stress response (ISR). Catalyzes degradation of MICU1 when MICU1 is not assembled via an interchain disulfide. This is ATP-dependent zinc metalloprotease YME1L1 (Yme1l1) from Mus musculus (Mouse).